A 729-amino-acid chain; its full sequence is Fibroblast growth factor receptor homolog 1 (729 aa).

The first 36 residues, 1 to 36 (MAAAWSWRASHSTITMTSGSLVVLFLLLSIWQPAVQ), serve as a signal peptide directing secretion. At 37–309 (VEGRRQMANS…VASGSLHSTS (273 aa)) the chain is on the extracellular side. Positions 56–101 (ARSQNKTPAITNNANQSSTSSADLDDGAADDDDNKADLPVNVSSKP) are disordered. Positions 66 to 77 (TNNANQSSTSSA) are enriched in low complexity. Asparagine 70 carries an N-linked (GlcNAc...) asparagine glycan. The span at 78-89 (DLDDGAADDDDN) shows a compositional bias: acidic residues. N-linked (GlcNAc...) asparagine glycosylation is found at asparagine 96, asparagine 134, asparagine 140, asparagine 171, asparagine 207, asparagine 213, asparagine 242, asparagine 246, and asparagine 282. 2 consecutive Ig-like C2-type domains span residues 106-192 (PKKM…VIVS) and 203-279 (TGPL…NSLG). Cysteines 125 and 174 form a disulfide. Cysteine 220 and cysteine 272 form a disulfide bridge. A helical transmembrane segment spans residues 310 to 330 (FVYIFVFGGLIFIFMTTLFVF). At 331–729 (YAIRKMKHEK…TDNLQKWCNY (399 aa)) the chain is on the cytoplasmic side. Residues 416 to 692 (LVLGATLGEG…EIVEYMDKLL (277 aa)) form the Protein kinase domain. ATP is bound by residues 422–430 (LGEGAFGRV) and lysine 443. Residue aspartate 556 is the Proton acceptor of the active site. Residue tyrosine 587 is modified to Phosphotyrosine; by autocatalysis.

The protein belongs to the protein kinase superfamily. Tyr protein kinase family. Fibroblast growth factor receptor subfamily. In terms of tissue distribution, in early embryos, expression is specific to mesodermal primordium and invaginated mesodermal cells. At later stages, expression is seen in putative muscle precursor cells and in the CNS.

Its subcellular location is the membrane. It catalyses the reaction L-tyrosyl-[protein] + ATP = O-phospho-L-tyrosyl-[protein] + ADP + H(+). Functionally, may be required for patterning of muscle precursor cells. May be essential for generation of mesodermal and endodermal layers, invaginations of various types of cells and CNS formation. The protein is Fibroblast growth factor receptor homolog 1 (htl) of Drosophila melanogaster (Fruit fly).